The chain runs to 364 residues: uncharacterized protein (364 aa).

This is an uncharacterized protein from Saccharum officinarum (Sugarcane).